The chain runs to 157 residues: MADKNERAIKVVAENRKARFNYAIEDTIEAGISLTGTEVKSVRSGKSTIAESYADSRGGEIWLINANIPEYLQANRFNHEPKRPRKLLLHRKQINKLMGAVERQGMTLIPLKLYFNEKGRAKLLLALAKGKQLHDKRETEKKRDWSREKGRLLRARG.

Over residues 135–151 (DKRETEKKRDWSREKGR) the composition is skewed to basic and acidic residues. The disordered stretch occupies residues 135 to 157 (DKRETEKKRDWSREKGRLLRARG).

It belongs to the SmpB family.

It is found in the cytoplasm. In terms of biological role, required for rescue of stalled ribosomes mediated by trans-translation. Binds to transfer-messenger RNA (tmRNA), required for stable association of tmRNA with ribosomes. tmRNA and SmpB together mimic tRNA shape, replacing the anticodon stem-loop with SmpB. tmRNA is encoded by the ssrA gene; the 2 termini fold to resemble tRNA(Ala) and it encodes a 'tag peptide', a short internal open reading frame. During trans-translation Ala-aminoacylated tmRNA acts like a tRNA, entering the A-site of stalled ribosomes, displacing the stalled mRNA. The ribosome then switches to translate the ORF on the tmRNA; the nascent peptide is terminated with the 'tag peptide' encoded by the tmRNA and targeted for degradation. The ribosome is freed to recommence translation, which seems to be the essential function of trans-translation. The polypeptide is SsrA-binding protein (Rhodopseudomonas palustris (strain BisB5)).